The following is a 458-amino-acid chain: MVNLRKAVHSFLVHLIGLLVWQCDISVSPVAALVTDIFNTSDGGRFKFPDGVQNWPALSIVIIIILTIGGNILVIMAVSLEKKLHNATNYFLMSLAIADMLVGLLVMPLSLLAILYDYVWPLPRYLCPVWISLDVLFSTASIMHLCAISLDRYVAIRNPVEHSRFNSRTKAIMKIAIVWAISIGVSVPIPVIGLRDEEKVFVNNTTCVLNDPNFVLIGSFVAFFIPLTIMVITYCLTIHVLRRQALMLLHGHVEEPPRINLDFLKCCRRNGTEEENSANPNQDSNPRRRKKKERRPRGTMQAINNERKASKVLGIVFFVFLVMWCPFFITNILSVLCGKACNQKLMEKLLNVFVWIGYVCSGINPLVYTLFNKIYRRAFSNYLRCNYKPEKKPPVRQMPRVAATALSGRELNVNIYRHTNEPVLKKANDKEPGIEMQVENLELPVNPSSVVSERISSV.

Positions 1–32 (MVNLRKAVHSFLVHLIGLLVWQCDISVSPVAA) are cleaved as a signal peptide. The Extracellular portion of the chain corresponds to 33–55 (LVTDIFNTSDGGRFKFPDGVQNW). A helical transmembrane segment spans residues 56–80 (PALSIVIIIILTIGGNILVIMAVSL). Topologically, residues 81 to 86 (EKKLHN) are cytoplasmic. The helical transmembrane segment at 87–111 (ATNYFLMSLAIADMLVGLLVMPLSL) threads the bilayer. Residues 112 to 128 (LAILYDYVWPLPRYLCP) lie on the Extracellular side of the membrane. Cys127 and Cys207 are disulfide-bonded. The helical transmembrane segment at 129 to 151 (VWISLDVLFSTASIMHLCAISLD) threads the bilayer. Thr139 contacts ergotamine. The short motif at 151 to 153 (DRY) is the DRY motif; important for ligand-induced conformation changes element. Residues 152–167 (RYVAIRNPVEHSRFNS) are Cytoplasmic-facing. Residues 168–189 (RTKAIMKIAIVWAISIGVSVPI) traverse the membrane as a helical segment. The Extracellular segment spans residues 190–213 (PVIGLRDEEKVFVNNTTCVLNDPN). N-linked (GlcNAc...) asparagine glycans are attached at residues Asn203 and Asn204. An ergotamine-binding site is contributed by Leu209. The chain crosses the membrane as a helical span at residues 214-236 (FVLIGSFVAFFIPLTIMVITYCL). At 237–311 (TIHVLRRQAL…AINNERKASK (75 aa)) the chain is on the cytoplasmic side. A disordered region spans residues 272 to 301 (TEEENSANPNQDSNPRRRKKKERRPRGTMQ). Over residues 287–297 (RRRKKKERRPR) the composition is skewed to basic residues. A helical transmembrane segment spans residues 312–336 (VLGIVFFVFLVMWCPFFITNILSVL). Cys337 and Cys341 are disulfide-bonded. Residues 337-347 (CGKACNQKLME) are Extracellular-facing. The chain crosses the membrane as a helical span at residues 348 to 370 (KLLNVFVWIGYVCSGINPLVYTL). The NPxxY motif; important for ligand-induced conformation changes and signaling motif lies at 364–368 (NPLVY). Residues 371 to 458 (FNKIYRRAFS…SVVSERISSV (88 aa)) are Cytoplasmic-facing. Positions 456 to 458 (SSV) match the PDZ-binding motif.

The protein belongs to the G-protein coupled receptor 1 family. As to quaternary structure, interacts with MPDZ. Interacts with ARRB2. Interacts with MPP3; this interaction stabilizes the receptor at the plasma membrane and prevents the desensitization of the HTR2C receptor-mediated calcium response.

Its subcellular location is the cell membrane. In terms of biological role, G-protein coupled receptor for 5-hydroxytryptamine (serotonin). Also functions as a receptor for various drugs and psychoactive substances, including ergot alkaloid derivatives, 1-2,5,-dimethoxy-4-iodophenyl-2-aminopropane (DOI) and lysergic acid diethylamide (LSD). Ligand binding causes a conformation change that triggers signaling via guanine nucleotide-binding proteins (G proteins) and modulates the activity of downstream effectors. HTR2C is coupled to G(q)/G(11) G alpha proteins and activates phospholipase C-beta, releasing diacylglycerol (DAG) and inositol 1,4,5-trisphosphate (IP3) second messengers that modulate the activity of phosphatidylinositol 3-kinase and promote the release of Ca(2+) ions from intracellular stores, respectively. Beta-arrestin family members inhibit signaling via G proteins and mediate activation of alternative signaling pathways. Regulates neuronal activity via the activation of short transient receptor potential calcium channels in the brain, and thereby modulates the activation of pro-opiomelanocortin neurons and the release of CRH that then regulates the release of corticosterone. Plays a role in the regulation of appetite and eating behavior, responses to anxiogenic stimuli and stress. Plays a role in insulin sensitivity and glucose homeostasis. The protein is 5-hydroxytryptamine receptor 2C of Canis lupus familiaris (Dog).